A 343-amino-acid polypeptide reads, in one-letter code: Glucokinase (343 aa).

An ATP-binding site is contributed by 18–23 (GDIGGT).

This sequence belongs to the bacterial glucokinase family.

Its subcellular location is the cytoplasm. The catalysed reaction is D-glucose + ATP = D-glucose 6-phosphate + ADP + H(+). The chain is Glucokinase from Brucella melitensis biotype 1 (strain ATCC 23456 / CCUG 17765 / NCTC 10094 / 16M).